The following is a 421-amino-acid chain: Imidazolonepropionase (421 aa).

Fe(3+) contacts are provided by His-81 and His-83. His-81 and His-83 together coordinate Zn(2+). Arg-90, Tyr-153, and His-186 together coordinate 4-imidazolone-5-propanoate. Residue Tyr-153 coordinates N-formimidoyl-L-glutamate. Residue His-251 coordinates Fe(3+). His-251 is a binding site for Zn(2+). Position 254 (Glu-254) interacts with 4-imidazolone-5-propanoate. Fe(3+) is bound at residue Asp-326. Asp-326 contacts Zn(2+). N-formimidoyl-L-glutamate contacts are provided by Asn-328 and Gly-330. Ser-331 is a binding site for 4-imidazolone-5-propanoate.

The protein belongs to the metallo-dependent hydrolases superfamily. HutI family. It depends on Zn(2+) as a cofactor. Fe(3+) serves as cofactor.

It is found in the cytoplasm. The catalysed reaction is 4-imidazolone-5-propanoate + H2O = N-formimidoyl-L-glutamate. It participates in amino-acid degradation; L-histidine degradation into L-glutamate; N-formimidoyl-L-glutamate from L-histidine: step 3/3. Catalyzes the hydrolytic cleavage of the carbon-nitrogen bond in imidazolone-5-propanoate to yield N-formimidoyl-L-glutamate. It is the third step in the universal histidine degradation pathway. The chain is Imidazolonepropionase from Streptococcus pyogenes serotype M1.